The chain runs to 2564 residues: MAPNMTAPEPIAIIGMSCRFPGGASEPSRLWDTLSEGKSAWSEVPEDRFNMKAFYQRGDPHASTTNTAGGHFLDEDLSKFDSNFFGVKPLEARAWDPQQRLTLELAYEAFENAGLTIPQLWGSNTGVYVGQWSSDYSEILARDPEYQELYHTLGAGPAITSNRVSFFFNLRGPSFTVDTGCSSSLVALHNAVQSLRNGESTMSLVGGVNVLLDPQRFTYQSKLKMFSPDGRSFSFDHRANGYGRGEGCGCVVLKPLSLAVKDGDRIRAVIRNSALNQDGRTPQGISVPSMVAQEELIRRAYAEVGLVPTETDYVEAHGTGTAVGDPIEAQAIAAVLAQTRKPGQEPLSLASVKGNIGHTESAAGIAGLIKSVLMLENQAIPPQVNYEKPNPKIPLDKWNLQIPIRFEEKQLRRISVNSFGYGGTNAHVIVDRVDEHNHSNGTNGTNGTHHHNGTNGSNGNGTNGTNGTNGTDGFHDTESISDSISDRPRVFVLSGAEEQSCHQNAERLAQYLTKLPASLLEDSDGFLDKLAVSVNKRTVHDYSASVIAYDGEDLLAQLDVLQQTPVAIRAPVKGGARVGYVFGGQGAQYYSMGREMIKSWTPFRQSLDRANAHLKTMGCQWDLLTELSHEKAQDSHVDEPEYGQTLSTAVQLALVDTLVATKMRPTSVVGHSSGEIAAAYAAGALSFEDALTVAYHRGRLTSQLISTGISGGMLAVGSSPDAVQDYIEQVKATTKANVKIACYNSPTSVTLSGDSEAINAISELLQDDDVFNRKLKTQGAAYHSQMMQAMEEEYRSAIAYIQPRPVDAPVTMMSSLLGKKLPAGFLLDGDYWARNLVSPVLFAGALRGIMVGDEHDGSSQHSPQVDLLLEIGPHATMQGAVKETLKGLGSSVRIQYLSCLKRKTSAAENMLRTLADLFALGASVDLHYANAGFRTKLPPILKDLPPYAFNHDQRLWHDGRISHEFTHRQFLPHELLGNLSADVNHTEPRWRRFLRLKELPWLQHHIVQGQVIFPAAGYLAMAMEAMRRFTAFETENQSKATAGYSFRNTSFSKALVLREDDADTEICLSLRPEARSARNSWQDWKEFRVFSISPGKGWSEHCRGRIRAVVDQGILAEALKDTTGVKDRIAASVPHHITSNRLYATARQVGMEWYGPFDNVVNLQARTDLSVATNRMPTLLSSAHPFGLSTYVVHPGMLDSTLFHGLVASVLVEQEVKAPVVPTFLEQLTISTAIQVPEGEELRTYSVSREEGSCWSAQVELNGESVISFHGLRTAQLPSDVVNTRPHQLAHSPEWVCHYPSMTREQLIDTCINSVPAGSARQRNIVLYADVRAHVERALSHVQPDQVASGHEQSWYNWMKSFLATEPDSSDVVSEAREATKSEKFVGFDAVKIIGENLEQLLTGEVTSLSLLSTNDMLERLYSEERNQRCYTQISAYCKAVGLYNPALKVLEVGGGTASATLPFLQALSHQGHPLVAQYDFTDLSTAFFAAARERLGQYGHNVNYEAFDLAQDPETQGFEPGSYDIIVACNVVHATPSIASSLEHIRQLLRPGGTLVLMEITNGDPFYQLIFGSLSGWWSGVSEGRESTAILSEYDWKNVLAEQGYQSDPIMVGDYATSEGGTISVIFAKTPLESRRDHLSETSLHFATDLFADSSAGYLDNVAEHLGQKSELSLRQITTGNLESIKDIDSTVVVIDPETIEALAGRMDASLWEKFQKCALSCKGLLLVSRGATGSSVVPEGALAVGFARSMRLEQHGIRYITLDLDPSVDRDANELSRVLAQLLTSETFDFDRTISDADYEFAERKGQLHVNRLFPNVKLEESVAHSTRRSKPEQTEFLDTSRPLKVELGVDGLLETFRWVDDHQHARSLAPDEVRIECRAASINFRDVLIATGGLGGAGTMMNDCAGTVVEVGSNMASRYSVGDRVCSYYAQSYNNYPIVDGQHCAKIPDNVSFALGASLPIVWATTYHSLVNVAKLKAGESILIHAAAGAVGQAAVILAQHLGAVVYATCGSQEKRERLESMGVNPSHIFTSRSPAFGPALRAATNNKGVNVILNSLAGELFRESLECLTSFGRFIEIGKKDFLDDALMPTKFLLQNITFACVDLVQMINEDKPLVHGLLNDVVELVASGQLKDEVNLQLYKLGEIESAFRLISAGKHMGKVILTVDQGETVLALPATPNIPKLLPDATYLLVGGFGGLGVRLIRWLASRGAKTIVTMSRSGAKSPAAKTCIEEMDSLGVRIIAKSCDISSKEALQVVVKELEDVDGLAPVRGVINAAMALEDAMFDQMTHQQWVSSLAPKVAGTRNLDEVLPNYMDFFVVLSSIAGIIGHQAQANYAAACTFQDAFMHYRRSQGRASFAIDVGVVSDAGFVSEAPAVFSNMKRQGFSFISVAELLATLDYALSNDGPDCQASIGVMAEASPNNAEWLEQRRISHLVKDSANGAAGLNEGSGSDADHIGHIRSAKTAEEALDAVGQAVLAELSKLTVTPVDRILPHRTLDSYGVDSLVAVELRNWVVAIVAADLSLLLIRESRSIEELIHLVAGKSRLVPAKLQDAVSKLA.

A Ketosynthase family 3 (KS3) domain is found at 8 to 432; it reads PEPIAIIGMS…GTNAHVIVDR (425 aa). Residues cysteine 181, histidine 317, and histidine 358 each act as for beta-ketoacyl synthase activity in the active site. The interval 435–482 is disordered; that stretch reads EHNHSNGTNGTNGTHHHNGTNGSNGNGTNGTNGTNGTDGFHDTESISD. Residues 439–455 are compositionally biased toward low complexity; the sequence is SNGTNGTNGTHHHNGTN. The span at 473–482 shows a compositional bias: basic and acidic residues; it reads GFHDTESISD. Residues 580–914 form a malonyl-CoA:ACP transacylase (MAT) domain region; the sequence is YVFGGQGAQY…SAAENMLRTL (335 aa). The interval 973–1113 is N-terminal hotdog fold; the sequence is HELLGNLSAD…GRIRAVVDQG (141 aa). Positions 973–1280 are dehydratase (DH) domain; that stretch reads HELLGNLSAD…GLRTAQLPSD (308 aa). The 311-residue stretch at 973 to 1283 folds into the PKS/mFAS DH domain; the sequence is HELLGNLSAD…TAQLPSDVVN (311 aa). The active-site Proton acceptor; for dehydratase activity is histidine 1005. The segment at 1130 to 1283 is C-terminal hotdog fold; sequence AASVPHHITS…TAQLPSDVVN (154 aa). Aspartate 1199 serves as the catalytic Proton donor; for dehydratase activity. The interval 1451-1556 is methyltransferase (CMet) domain; the sequence is LEVGGGTASA…RQLLRPGGTL (106 aa). The segment at 1854-2167 is enoyl reductase (ER) domain; that stretch reads GLLETFRWVD…AGKHMGKVIL (314 aa). Positions 2191–2370 are ketoreductase (KR) domain; sequence ATYLLVGGFG…SFAIDVGVVS (180 aa). The Carrier domain occupies 2472-2549; it reads EALDAVGQAV…ELIHLVAGKS (78 aa). Serine 2509 carries the O-(pantetheine 4'-phosphoryl)serine modification.

It participates in secondary metabolite biosynthesis. Functionally, highly reducing polyketide synthase; part of the gene cluster that mediates the biosynthesis of the lipopeptides W493 A and B. W493 A and B consist of six amino acid residues D-allo-thr, L-Ala, D-Ala, L-Gln, D-Tyr, and L-Val/L-Ile linked to a 3-hydroxy-4-methyltetradecanoic acid polyketide chain. The biosynthesis starts with formation of the linear polyketide chain by the highly reducing polyketide synthase PKS40. The gene cluster contains a putative acyl-CoA ligase (FPSE_09184) for formation of a CoA thioester polyketide. The thiol bond could be hydrolyzed by the putative thioesterase (FPSE_09186) and then accepted by the first T domain in module 1 of NRPS32. The second T domain is responsible for accepting a threonine, which is adenylated by the A domain and epimerized to the D-allo-threonine formed by the E domain. The five successive modules incorporate Ala, Ala, Gln, Tyr, and Val/Ile into the final product, which is released by cyclization. The chain is Highly reducing polyketide synthase 40 from Fusarium pseudograminearum (strain CS3096) (Wheat and barley crown-rot fungus).